A 747-amino-acid polypeptide reads, in one-letter code: Fatty acid oxidation complex subunit alpha (747 aa).

The interval 1 to 197 (MGASATNSVT…KMGLVDDVVP (197 aa)) is enoyl-CoA hydratase. Residues 313 to 747 (RAIHRVGVLG…NIDEVTDVAS (435 aa)) form a 3-hydroxyacyl-CoA dehydrogenase region. Positions 590–614 (YLYSNPTKNSSPTKNGNSPAKRNSF) are disordered. Residues 593-610 (SNPTKNSSPTKNGNSPAK) are compositionally biased toward polar residues.

In the N-terminal section; belongs to the enoyl-CoA hydratase/isomerase family. The protein in the central section; belongs to the 3-hydroxyacyl-CoA dehydrogenase family. Heterotetramer of two alpha chains (FadJ) and two beta chains (FadI).

Its subcellular location is the cytoplasm. It catalyses the reaction a (3S)-3-hydroxyacyl-CoA = a (2E)-enoyl-CoA + H2O. The enzyme catalyses a 4-saturated-(3S)-3-hydroxyacyl-CoA = a (3E)-enoyl-CoA + H2O. The catalysed reaction is a (3S)-3-hydroxyacyl-CoA + NAD(+) = a 3-oxoacyl-CoA + NADH + H(+). It carries out the reaction (3S)-3-hydroxybutanoyl-CoA = (3R)-3-hydroxybutanoyl-CoA. It functions in the pathway lipid metabolism; fatty acid beta-oxidation. Catalyzes the formation of a hydroxyacyl-CoA by addition of water on enoyl-CoA. Also exhibits 3-hydroxyacyl-CoA epimerase and 3-hydroxyacyl-CoA dehydrogenase activities. This is Fatty acid oxidation complex subunit alpha from Yersinia pseudotuberculosis serotype O:1b (strain IP 31758).